Consider the following 360-residue polypeptide: Phenylalanine--tRNA ligase alpha subunit (360 aa).

Residue glutamate 255 coordinates Mg(2+).

This sequence belongs to the class-II aminoacyl-tRNA synthetase family. Phe-tRNA synthetase alpha subunit type 1 subfamily. Tetramer of two alpha and two beta subunits. The cofactor is Mg(2+).

It localises to the cytoplasm. It catalyses the reaction tRNA(Phe) + L-phenylalanine + ATP = L-phenylalanyl-tRNA(Phe) + AMP + diphosphate + H(+). This chain is Phenylalanine--tRNA ligase alpha subunit, found in Rhizorhabdus wittichii (strain DSM 6014 / CCUG 31198 / JCM 15750 / NBRC 105917 / EY 4224 / RW1) (Sphingomonas wittichii).